Here is a 177-residue protein sequence, read N- to C-terminus: Large ribosomal subunit protein uL6 (177 aa).

The disordered stretch occupies residues Glu-155–Lys-177.

The protein belongs to the universal ribosomal protein uL6 family. As to quaternary structure, part of the 50S ribosomal subunit.

Its function is as follows. This protein binds to the 23S rRNA, and is important in its secondary structure. It is located near the subunit interface in the base of the L7/L12 stalk, and near the tRNA binding site of the peptidyltransferase center. The protein is Large ribosomal subunit protein uL6 of Bartonella tribocorum (strain CIP 105476 / IBS 506).